Consider the following 418-residue polypeptide: MSLLAIGINHNTASVDLREKVAFGPDKLGPALEQLREHEAVNGSVIVSTCNRTELYCDVKQGARNKLIDWLAQFHQVSREDLMPSLYVHEEQAAIKHLMRVSCGLDSLVLGEPQILGQVKQAFSDSRDHQAVDSSIDKLFQKTFSVAKRVRTETDIGGNAVSVAYAACTLAKHIFESLSDSTVLLVGAGETIELVAKHLASNGCTKMIVANRTKERAQGLAEQFGAEVISLNEIPDYLARADIVISSTASPLPIIGKGMVETALKQRRHQPILLVDIAVPRDVEAQVGELNDAYLYSVDDLQSIIDSNIEQRKVEAIQAEAIVSEESASFMTWLRSLQAVDSIRDYRKSANEIREELLSKSLQSLAAGADPEKVLRELSNKLTNKLIHAPTRALQSAAEQGEPAKLTIIRQTLGLDDL.

Substrate-binding positions include 49 to 52, serine 107, 112 to 114, and glutamine 118; these read TCNR and EPQ. The active-site Nucleophile is the cysteine 50. Residue 187 to 192 coordinates NADP(+); it reads GAGETI.

This sequence belongs to the glutamyl-tRNA reductase family. In terms of assembly, homodimer.

The enzyme catalyses (S)-4-amino-5-oxopentanoate + tRNA(Glu) + NADP(+) = L-glutamyl-tRNA(Glu) + NADPH + H(+). It functions in the pathway porphyrin-containing compound metabolism; protoporphyrin-IX biosynthesis; 5-aminolevulinate from L-glutamyl-tRNA(Glu): step 1/2. Its function is as follows. Catalyzes the NADPH-dependent reduction of glutamyl-tRNA(Glu) to glutamate 1-semialdehyde (GSA). The chain is Glutamyl-tRNA reductase from Vibrio parahaemolyticus serotype O3:K6 (strain RIMD 2210633).